Reading from the N-terminus, the 513-residue chain is Maturase K (513 aa).

It belongs to the intron maturase 2 family. MatK subfamily.

It localises to the plastid. It is found in the chloroplast. Functionally, usually encoded in the trnK tRNA gene intron. Probably assists in splicing its own and other chloroplast group II introns. The chain is Maturase K from Astrebla lappacea (Curly Mitchell grass).